The primary structure comprises 126 residues: Fluoride-specific ion channel FluC 3 (126 aa).

4 helical membrane-spanning segments follow: residues 7–27 (MWVG…GLSI), 37–57 (LGTF…SILF), 68–87 (LMNT…FSSM), and 101–121 (AIAA…AAFG). Na(+)-binding residues include Gly79 and Thr82.

Belongs to the fluoride channel Fluc/FEX (TC 1.A.43) family.

It localises to the cell inner membrane. The enzyme catalyses fluoride(in) = fluoride(out). With respect to regulation, na(+) is not transported, but it plays an essential structural role and its presence is essential for fluoride channel function. Fluoride-specific ion channel. Important for reducing fluoride concentration in the cell, thus reducing its toxicity. This Yersinia pestis protein is Fluoride-specific ion channel FluC 3.